Here is a 166-residue protein sequence, read N- to C-terminus: Myosin regulatory light chain 2, ventricular/cardiac muscle isoform (166 aa).

A N,N,N-trimethylalanine modification is found at alanine 2. Phosphoserine; by MLCK occurs at positions 14 and 15. Residue serine 19 is modified to Phosphoserine. EF-hand domains follow at residues 24–59 (TQIQ…LGRV), 94–129 (DPEE…QAER), and 130–165 (FSKE…GEEK). Positions 37, 39, 41, and 48 each coordinate Ca(2+). Threonine 52 bears the Phosphothreonine mark.

In terms of assembly, myosin is a hexamer of 2 heavy chains and 4 light chains. Interacts with MYOC. In terms of processing, N-terminus is methylated by METTL11A/NTM1. Post-translationally, phosphorylated by MYLK3 and MYLK2; promotes cardiac muscle contraction and function. Dephosphorylated by PPP1CB complexed to PPP1R12B. The phosphorylated form in adult is expressed as gradients across the heart from endocardium (low phosphorylation) to epicardium (high phosphorylation); regulates cardiac torsion and workload distribution. Abundantly expressed in both cardiac and slow skeletal muscle. In the adult heart, the phosphorylated form is highly expressed in epicardium and weakly in endocardium.

The protein localises to the cytoplasm. It is found in the myofibril. It localises to the sarcomere. The protein resides in the a band. Its function is as follows. Contractile protein that plays a role in heart development and function. Following phosphorylation, plays a role in cross-bridge cycling kinetics and cardiac muscle contraction by increasing myosin lever arm stiffness and promoting myosin head diffusion; as a consequence of the increase in maximum contraction force and calcium sensitivity of contraction force. These events altogether slow down myosin kinetics and prolong duty cycle resulting in accumulated myosins being cooperatively recruited to actin binding sites to sustain thin filament activation as a means to fine-tune myofilament calcium sensitivity to force. During cardiogenesis plays an early role in cardiac contractility by promoting cardiac myofibril assembly. The chain is Myosin regulatory light chain 2, ventricular/cardiac muscle isoform from Mus musculus (Mouse).